We begin with the raw amino-acid sequence, 420 residues long: 3-isopropylmalate dehydratase large subunit (420 aa).

Residues C300, C360, and C363 each coordinate [4Fe-4S] cluster.

This sequence belongs to the aconitase/IPM isomerase family. LeuC type 2 subfamily. As to quaternary structure, heterodimer of LeuC and LeuD. [4Fe-4S] cluster serves as cofactor.

The enzyme catalyses (2R,3S)-3-isopropylmalate = (2S)-2-isopropylmalate. It functions in the pathway amino-acid biosynthesis; L-leucine biosynthesis; L-leucine from 3-methyl-2-oxobutanoate: step 2/4. Functionally, catalyzes the isomerization between 2-isopropylmalate and 3-isopropylmalate, via the formation of 2-isopropylmaleate. This is 3-isopropylmalate dehydratase large subunit from Syntrophus aciditrophicus (strain SB).